Consider the following 159-residue polypeptide: Alpha-lactalbumin (159 aa).

An N-terminal signal peptide occupies residues Met1–Ala19. A C-type lysozyme domain is found at Thr20–Pro142. 4 disulfides stabilise this stretch: Cys25–Cys139, Cys47–Cys130, Cys80–Cys96, and Cys92–Cys110. Residue Asn64 is glycosylated (N-linked (GlcNAc...) asparagine). Residues Lys98, Asp101, Asp106, and Asp107 each coordinate Ca(2+).

The protein belongs to the glycosyl hydrolase 22 family. As to quaternary structure, lactose synthase (LS) is a heterodimer of a catalytic component, beta1,4-galactosyltransferase (beta4Gal-T1) and a regulatory component, alpha-lactalbumin (LA). Mammary gland specific. Secreted in milk.

The protein resides in the secreted. In terms of biological role, regulatory subunit of lactose synthase, changes the substrate specificity of galactosyltransferase in the mammary gland making glucose a good acceptor substrate for this enzyme. This enables LS to synthesize lactose, the major carbohydrate component of milk. In other tissues, galactosyltransferase transfers galactose onto the N-acetylglucosamine of the oligosaccharide chains in glycoproteins. The chain is Alpha-lactalbumin (Lalba) from Rattus norvegicus (Rat).